Consider the following 1178-residue polypeptide: Leucine--tRNA ligase, cytoplasmic (1178 aa).

Residues Y54 and Y56 each contribute to the L-leucine site. The 'HIGH' region signature appears at 62–65; that stretch reads HLGH. Position 169 is a phosphoserine (S169). The interval 262 to 511 is editing domain; sequence GPQEYTLVKL…DAGDALIYME (250 aa). Residues L596 and S599 each contribute to the L-leucine site. Positions 718–722 match the 'KMSKS' region motif; that stretch reads KMSKS. K721 provides a ligand contact to ATP. The residue at position 722 (S722) is a Phosphoserine. Residues K972 and K1049 each carry the N6-acetyllysine modification.

The protein belongs to the class-I aminoacyl-tRNA synthetase family.

It is found in the cytoplasm. The enzyme catalyses tRNA(Leu) + L-leucine + ATP = L-leucyl-tRNA(Leu) + AMP + diphosphate. It catalyses the reaction L-methionyl-tRNA(Leu) + H2O = tRNA(Leu) + L-methionine + H(+). 5-fluoro-1,3-dihydro-1-hydroxy-1,2-benzoxaborole inhibits LARS1 by forming a covalent adduct with the 3' adenosine of tRNA(Leu) at the editing site, thus locking the enzyme in an inactive conformation. Aminoacyl-tRNA synthetase that catalyzes the specific attachment of leucine to its cognate tRNA (tRNA(Leu)). It performs tRNA aminoacylation in a two-step reaction: Leu is initially activated by ATP to form a leucyl-adenylate (Leu-AMP) intermediate; then the leucyl moiety is transferred to the acceptor 3' end of the tRNA to yield leucyl-tRNA. To improve the fidelity of catalytic reactions, it is also able to hydrolyze misactivated aminoacyl-adenylate intermediates (pre-transfer editing) and mischarged aminoacyl-tRNAs (post-transfer editing). The polypeptide is Leucine--tRNA ligase, cytoplasmic (Lars1) (Mus musculus (Mouse)).